Here is a 507-residue protein sequence, read N- to C-terminus: ATP synthase subunit alpha, chloroplastic (507 aa).

170–177 is a binding site for ATP; sequence GDRQTGKT. 3 disordered regions span residues 278-325, 392-430, and 452-471; these read PRRP…TQAG, EPEASAQFASDPDKATRNQSARGQRSRELLKQSQPAPLP, and GQVQGSPAQSREYLVTNKPE. Residues 282-303 show a composition bias toward basic and acidic residues; the sequence is PGREAHPGDVPHLHPRPPERAA. Residues 305–322 are compositionally biased toward polar residues; the sequence is LSSQPGEGSTTASPTVET.

Belongs to the ATPase alpha/beta chains family. F-type ATPases have 2 components, CF(1) - the catalytic core - and CF(0) - the membrane proton channel. CF(1) has five subunits: alpha(3), beta(3), gamma(1), delta(1), epsilon(1). CF(0) has four main subunits: a, b, b' and c.

It is found in the plastid. It localises to the chloroplast thylakoid membrane. It carries out the reaction ATP + H2O + 4 H(+)(in) = ADP + phosphate + 5 H(+)(out). Functionally, produces ATP from ADP in the presence of a proton gradient across the membrane. The alpha chain is a regulatory subunit. This is ATP synthase subunit alpha, chloroplastic from Selaginella uncinata (Blue spike-moss).